The primary structure comprises 220 residues: Vesicle-associated membrane protein 7 (220 aa).

An N-acetylalanine modification is found at Ala2. Over 2–188 the chain is Cytoplasmic; sequence AILFAVVARG…ARAMCVKNVK (187 aa). The Longin domain occupies 7 to 110; it reads VVARGTTILA…AMNSEFSSVL (104 aa). Positions 125–185 constitute a v-SNARE coiled-coil homology domain; that stretch reads RVTETQAQVD…RNLARAMCVK (61 aa). 2 positions are modified to phosphoserine: Ser167 and Ser168. The chain crosses the membrane as a helical; Anchor for type IV membrane protein span at residues 189 to 209; that stretch reads LTAIIVVVSIVFIYIIVSPLC. Residues 210-220 lie on the Vesicular side of the membrane; that stretch reads GGFTWPSCVKK.

It belongs to the synaptobrevin family. In terms of assembly, may interact with STX17. Component of the SNARE complex composed of STX4, SNAP23 and VAMP7 that binds SYT7 during lysosomal exocytosis. Component of the SNARE complex composed of STX7, STX8, VAMP7 and VTI1B that is required for heterotypic fusion of late endosomes with lysosomes. Interacts with PICALM. Interacts with RAB21. Expressed in brain, kidney, liver, lung, spleen and thymus. Not expressed in heart and skeletal muscle.

It is found in the cytoplasmic vesicle. It localises to the secretory vesicle membrane. Its subcellular location is the golgi apparatus. The protein resides in the trans-Golgi network membrane. The protein localises to the late endosome membrane. It is found in the lysosome membrane. It localises to the endoplasmic reticulum membrane. Its subcellular location is the phagosome membrane. The protein resides in the synapse. The protein localises to the synaptosome. Involved in the targeting and/or fusion of transport vesicles to their target membrane during transport of proteins from the early endosome to the lysosome. Required for heterotypic fusion of late endosomes with lysosomes and homotypic lysosomal fusion. Required for calcium regulated lysosomal exocytosis. Involved in the export of chylomicrons from the endoplasmic reticulum to the cis Golgi. Required for exocytosis of mediators during eosinophil and neutrophil degranulation, and target cell killing by natural killer cells. Required for focal exocytosis of late endocytic vesicles during phagosome formation. The polypeptide is Vesicle-associated membrane protein 7 (Vamp7) (Rattus norvegicus (Rat)).